Here is a 114-residue protein sequence, read N- to C-terminus: Large ribosomal subunit protein uL22 (114 aa).

This sequence belongs to the universal ribosomal protein uL22 family. As to quaternary structure, part of the 50S ribosomal subunit.

Its function is as follows. This protein binds specifically to 23S rRNA; its binding is stimulated by other ribosomal proteins, e.g. L4, L17, and L20. It is important during the early stages of 50S assembly. It makes multiple contacts with different domains of the 23S rRNA in the assembled 50S subunit and ribosome. In terms of biological role, the globular domain of the protein is located near the polypeptide exit tunnel on the outside of the subunit, while an extended beta-hairpin is found that lines the wall of the exit tunnel in the center of the 70S ribosome. The sequence is that of Large ribosomal subunit protein uL22 from Streptococcus mutans serotype c (strain ATCC 700610 / UA159).